The following is a 413-amino-acid chain: Multifunctional CCA protein (413 aa).

ATP is bound by residues G8 and R11. CTP is bound by residues G8 and R11. D21 and D23 together coordinate Mg(2+). The ATP site is built by R91, R143, and R146. The CTP site is built by R91, R143, and R146. One can recognise an HD domain in the interval 232–333; sequence TGVHVMMVVD…VRFFERTDAL (102 aa).

It belongs to the tRNA nucleotidyltransferase/poly(A) polymerase family. Bacterial CCA-adding enzyme type 1 subfamily. In terms of assembly, monomer. Can also form homodimers and oligomers. Mg(2+) serves as cofactor. The cofactor is Ni(2+).

It catalyses the reaction a tRNA precursor + 2 CTP + ATP = a tRNA with a 3' CCA end + 3 diphosphate. The catalysed reaction is a tRNA with a 3' CCA end + 2 CTP + ATP = a tRNA with a 3' CCACCA end + 3 diphosphate. Catalyzes the addition and repair of the essential 3'-terminal CCA sequence in tRNAs without using a nucleic acid template. Adds these three nucleotides in the order of C, C, and A to the tRNA nucleotide-73, using CTP and ATP as substrates and producing inorganic pyrophosphate. tRNA 3'-terminal CCA addition is required both for tRNA processing and repair. Also involved in tRNA surveillance by mediating tandem CCA addition to generate a CCACCA at the 3' terminus of unstable tRNAs. While stable tRNAs receive only 3'-terminal CCA, unstable tRNAs are marked with CCACCA and rapidly degraded. The sequence is that of Multifunctional CCA protein from Burkholderia multivorans (strain ATCC 17616 / 249).